Reading from the N-terminus, the 404-residue chain is Subtilisin-like proteinase Mp1 (404 aa).

Residues 1–19 (MVGFKTLALHLAAVLPALA) form the signal peptide. A propeptide spanning residues 20-112 (APVDKQATQV…VEPDQVWDLY (93 aa)) is cleaved from the precursor. One can recognise an Inhibitor I9 domain in the interval 33–111 (SYIITLKQGA…FVEPDQVWDL (79 aa)). Residues 121 to 404 (PWGLGSISHR…NLIAFNGVTA (284 aa)) enclose the Peptidase S8 domain. Residue N133 is glycosylated (N-linked (GlcNAc...) asparagine). Catalysis depends on charge relay system residues D154, H186, and S347.

Belongs to the peptidase S8 family.

It localises to the secreted. The protein is Subtilisin-like proteinase Mp1 of Magnaporthiopsis poae (Kentucky bluegrass fungus).